The chain runs to 256 residues: Ciliary microtubule associated protein 1A (256 aa).

STPGR repeat units follow at residues 66–92 (PGPG…IYGR), 181–206 (PGPG…MTAR), and 217–242 (PGPG…FGIR). The tract at residues 91–115 (GRPRDISSFRTPGPGSYSPERAGKS) is disordered.

It belongs to the CIMAP family.

The protein localises to the cytoplasm. It is found in the cytoskeleton. Its subcellular location is the flagellum axoneme. Outer dense fibers are filamentous structures located on the outside of the axoneme in the midpiece and principal piece of the mammalian sperm tail. May help to maintain the passive elastic structures and elastic recoil of the sperm tail. This Xenopus laevis (African clawed frog) protein is Ciliary microtubule associated protein 1A (cimap1a).